The chain runs to 318 residues: Transaldolase (318 aa).

Lysine 132 functions as the Schiff-base intermediate with substrate in the catalytic mechanism.

The protein belongs to the transaldolase family. Type 1 subfamily. Homodimer.

It is found in the cytoplasm. It catalyses the reaction D-sedoheptulose 7-phosphate + D-glyceraldehyde 3-phosphate = D-erythrose 4-phosphate + beta-D-fructose 6-phosphate. The protein operates within carbohydrate degradation; pentose phosphate pathway; D-glyceraldehyde 3-phosphate and beta-D-fructose 6-phosphate from D-ribose 5-phosphate and D-xylulose 5-phosphate (non-oxidative stage): step 2/3. In terms of biological role, transaldolase is important for the balance of metabolites in the pentose-phosphate pathway. This is Transaldolase from Shewanella baltica (strain OS185).